Here is a 118-residue protein sequence, read N- to C-terminus: Large ribosomal subunit protein uL18 (118 aa).

Belongs to the universal ribosomal protein uL18 family. As to quaternary structure, part of the 50S ribosomal subunit; part of the 5S rRNA/L5/L18/L25 subcomplex. Contacts the 5S and 23S rRNAs.

This is one of the proteins that bind and probably mediate the attachment of the 5S RNA into the large ribosomal subunit, where it forms part of the central protuberance. The protein is Large ribosomal subunit protein uL18 of Rickettsia bellii (strain OSU 85-389).